Here is a 198-residue protein sequence, read N- to C-terminus: Recombination protein RecR (198 aa).

The C4-type zinc-finger motif lies at 57-72 (CSICCNLSEHDPCPIC). A Toprim domain is found at 80–175 (NIVCVVETPQ…KVTRLGYGLP (96 aa)).

It belongs to the RecR family.

In terms of biological role, may play a role in DNA repair. It seems to be involved in an RecBC-independent recombinational process of DNA repair. It may act with RecF and RecO. The chain is Recombination protein RecR from Endomicrobium trichonymphae.